Consider the following 432-residue polypeptide: Phosphomethylpyrimidine synthase (432 aa).

Residues N66, M95, Y124, H163, 185–187 (SRG), 226–229 (DGLR), and E265 contribute to the substrate site. A Zn(2+)-binding site is contributed by H269. Y292 contacts substrate. Position 333 (H333) interacts with Zn(2+). 3 residues coordinate [4Fe-4S] cluster: C409, C412, and C416.

Belongs to the ThiC family. Requires [4Fe-4S] cluster as cofactor.

The catalysed reaction is 5-amino-1-(5-phospho-beta-D-ribosyl)imidazole + S-adenosyl-L-methionine = 4-amino-2-methyl-5-(phosphooxymethyl)pyrimidine + CO + 5'-deoxyadenosine + formate + L-methionine + 3 H(+). Its pathway is cofactor biosynthesis; thiamine diphosphate biosynthesis. Catalyzes the synthesis of the hydroxymethylpyrimidine phosphate (HMP-P) moiety of thiamine from aminoimidazole ribotide (AIR) in a radical S-adenosyl-L-methionine (SAM)-dependent reaction. The sequence is that of Phosphomethylpyrimidine synthase from Caldanaerobacter subterraneus subsp. tengcongensis (strain DSM 15242 / JCM 11007 / NBRC 100824 / MB4) (Thermoanaerobacter tengcongensis).